The following is a 123-amino-acid chain: Basic phospholipase A2 Ph-TX1 (123 aa).

Ca(2+)-binding residues include Tyr-27, Gly-29, and Gly-31. Disulfide bonds link Cys-28-Cys-45, Cys-44-Cys-96, Cys-50-Cys-123, Cys-51-Cys-89, Cys-59-Cys-83, and Cys-77-Cys-87. The active site involves His-48. Asp-49 contacts Ca(2+). The active site involves Asp-90.

The protein belongs to the phospholipase A2 family. Group II subfamily. D49 sub-subfamily. In terms of assembly, monomer. Requires Ca(2+) as cofactor. As to expression, expressed by the venom gland.

The protein localises to the secreted. It catalyses the reaction a 1,2-diacyl-sn-glycero-3-phosphocholine + H2O = a 1-acyl-sn-glycero-3-phosphocholine + a fatty acid + H(+). Its activity is regulated as follows. Inhibited by divalent cations different from calcium ions (cadmium, magnesium, manganese, zinc), since they act as competitive antagonists of this cofactor. Functionally, snake venom phospholipase A2 (PLA2) that induces in vivo myotoxicity, moderates footpad edema, and causes in vitro neuromuscular blockade. PLA2 catalyzes the calcium-dependent hydrolysis of the 2-acyl groups in 3-sn-phosphoglycerides. This Bothrocophias hyoprora (Amazonian hognose viper) protein is Basic phospholipase A2 Ph-TX1.